Here is a 183-residue protein sequence, read N- to C-terminus: MFSMVEGLQVYGQQTIQAAKYIGQGFMVTLDHMNRLPMTVQYPYEKLIPSERFRGRIHFEFDKCIACEVCVRVCPINLPVVDWEFEKNIRKKQLTSYSIDFGVCIFCGNCVEYCPTNCLSMTEEYELSTYDRHELNHDQIALGRLPLSVVEDSTIRVISGLTKLPKGTMDGHSASKNVTNFLH.

4Fe-4S ferredoxin-type domains follow at residues 55–84 (GRIH…VDWE) and 95–124 (TSYS…MTEE). [4Fe-4S] cluster is bound by residues Cys-64, Cys-67, Cys-70, Cys-74, Cys-104, Cys-107, Cys-110, and Cys-114.

Belongs to the complex I 23 kDa subunit family. NDH is composed of at least 16 different subunits, 5 of which are encoded in the nucleus. [4Fe-4S] cluster serves as cofactor.

Its subcellular location is the plastid. The protein localises to the chloroplast thylakoid membrane. The catalysed reaction is a plastoquinone + NADH + (n+1) H(+)(in) = a plastoquinol + NAD(+) + n H(+)(out). It catalyses the reaction a plastoquinone + NADPH + (n+1) H(+)(in) = a plastoquinol + NADP(+) + n H(+)(out). Its function is as follows. NDH shuttles electrons from NAD(P)H:plastoquinone, via FMN and iron-sulfur (Fe-S) centers, to quinones in the photosynthetic chain and possibly in a chloroplast respiratory chain. The immediate electron acceptor for the enzyme in this species is believed to be plastoquinone. Couples the redox reaction to proton translocation, and thus conserves the redox energy in a proton gradient. The chain is NAD(P)H-quinone oxidoreductase subunit I, chloroplastic from Huperzia lucidula (Shining clubmoss).